Reading from the N-terminus, the 964-residue chain is A-type ATP synthase subunit A (964 aa).

The 127-residue stretch at 392–518 folds into the DOD-type homing endonuclease domain; sequence FLGYLMANGT…LSYLFAKLGI (127 aa).

It belongs to the ATPase alpha/beta chains family. In terms of assembly, has multiple subunits with at least A(3), B(3), C, D, E, F, H, I and proteolipid K(x). Post-translationally, this protein undergoes a protein self splicing that involves a post-translational excision of the VDE intervening region (intein) followed by peptide ligation.

The protein localises to the cell membrane. The catalysed reaction is ATP + H2O + 4 H(+)(in) = ADP + phosphate + 5 H(+)(out). Functionally, component of the A-type ATP synthase that produces ATP from ADP in the presence of a proton gradient across the membrane. The A chain is the catalytic subunit. This Pyrococcus horikoshii (strain ATCC 700860 / DSM 12428 / JCM 9974 / NBRC 100139 / OT-3) protein is A-type ATP synthase subunit A.